Here is a 506-residue protein sequence, read N- to C-terminus: MSDDDDFMHDSADEEYDFEYEDADDDETGDIGIENKYYNAKQIKVDNPEEAIDEFLGVPALEQDKGDWGFKGLKQAIKLEFKLGRYSDAVEHYRELLTYVKSAVTRNYSEKSINNMLDYIEKGSDDEKAYQCMEEFYSLTLNSFQNTNNERLWLKTNIKLARLWLERREYGQLSKKVRELHRACQREDGSDDPSKGTYLLELYALEIQMYAETKNNKRLKALYQRALRVRSAVPHPKIMGIIRECGGKMHMSEENWEEAQSDFFESFRNYDEAGSMQRIQVLKYLVLTTMLMKSDINPFHSQETKPYKTDPRISAMTDLVDAFQRDDIHAYEEVLSKNPDVLADPFIAENIDEVSRNMRTKAILKLIAPYTRFTLSFISKHIKISVTEAQDILSFLILDKKLNAKIDQESGTVVVESASDVERLRSVEEWNESLRTLWQVTLKDGDGFKNDDVSQPTGIGMRGPLLYQSGLDDDTAGLLRSSGHRFRRGGKGSKAGGGLGMKTGLF.

One can recognise a PCI domain in the interval 252–420 (SEENWEEAQS…GTVVVESASD (169 aa)). Over residues 482-491 (SGHRFRRGGK) the composition is skewed to basic residues. Residues 482–506 (SGHRFRRGGKGSKAGGGLGMKTGLF) form a disordered region. The span at 492 to 506 (GSKAGGGLGMKTGLF) shows a compositional bias: gly residues.

It belongs to the CSN2 family. In terms of assembly, component of the COP9 signalosome (CSN) complex.

The protein localises to the cytoplasm. It is found in the nucleus. Component of the COP9 signalosome (CSN) complex that acts as an regulator of the ubiquitin (Ubl) conjugation pathway by mediating the deneddylation of the cullin subunit of SCF-type E3 ubiquitin-protein ligase complexes. The CSN complex seems to link protein degradation to sexual development. Required for fruit body formation. This chain is COP9 signalosome complex subunit 2 (csnB), found in Emericella nidulans (strain FGSC A4 / ATCC 38163 / CBS 112.46 / NRRL 194 / M139) (Aspergillus nidulans).